We begin with the raw amino-acid sequence, 432 residues long: Alpha-ketoglutarate permease (432 aa).

Topologically, residues 1–32 (MAESTVTADSKLTSSDTRRRIWAIVGASSGNL) are cytoplasmic. Residues 33-53 (VEWFDFYVYSFCSLYFAHIFF) traverse the membrane as a helical segment. Topologically, residues 54 to 62 (PSGNTTTQL) are periplasmic. A helical membrane pass occupies residues 63 to 83 (LQTAGVFAAGFLMRPIGGWLF). Topologically, residues 84-95 (GRIADKHGRKKS) are cytoplasmic. The helical transmembrane segment at 96-116 (MLLSVCMMCFGSLVIACLPGY) threads the bilayer. At 117-118 (ET) the chain is on the periplasmic side. Residues 119-139 (IGTWAPALLLLARLFQGLSVG) form a helical membrane-spanning segment. The Cytoplasmic portion of the chain corresponds to 140 to 162 (GEYGTSATYMSEVAVEGRKGFYA). The helical transmembrane segment at 163–183 (SFQYVTLIGGQLLALLVVVVL) threads the bilayer. The Periplasmic portion of the chain corresponds to 184-193 (QHTMEDAALR). The chain crosses the membrane as a helical span at residues 194–214 (EWGWRIPFALGAVLAVVALWL). Residues 215–243 (RRQLDETSQQETRALKEAGSLKGLWRNRR) lie on the Cytoplasmic side of the membrane. The chain crosses the membrane as a helical span at residues 244–264 (AFIMVLGFTAAGSLCFYTFTT). At 265–279 (YMQKYLVNTAGMHAN) the chain is on the periplasmic side. The helical transmembrane segment at 280 to 300 (VASGIMTAALFVFMLIQPLIG) threads the bilayer. Residues 301-309 (ALSDKIGRR) are Cytoplasmic-facing. The helical transmembrane segment at 310-330 (TSMLCFGSLAAIFTVPILSAL) threads the bilayer. The Periplasmic segment spans residues 331 to 339 (QNVSSPYAA). The chain crosses the membrane as a helical span at residues 340 to 360 (FGLVMCALLIVSFYTSISGIL). Residues 361-373 (KAEMFPAQVRALG) are Cytoplasmic-facing. Residues 374-394 (VGLSYAVANAIFGGSAEYVAL) form a helical membrane-spanning segment. Residues 395–402 (SLKSIGME) lie on the Periplasmic side of the membrane. A helical transmembrane segment spans residues 403-423 (TAFFWYVTLMAVVAFLVSLML). The Cytoplasmic portion of the chain corresponds to 424 to 432 (HRKGKGMRL).

It belongs to the major facilitator superfamily. Metabolite:H+ Symporter (MHS) family (TC 2.A.1.6) family.

It localises to the cell inner membrane. Uptake of alpha-ketoglutarate across the boundary membrane with the concomitant import of a cation (symport system). This is Alpha-ketoglutarate permease (kgtP) from Escherichia coli (strain K12).